A 362-amino-acid chain; its full sequence is Epoxide hydrolase 4 (362 aa).

The helical; Signal-anchor for type II membrane protein transmembrane segment at 17–37 (SLLFWSLVYCYCGLCASIHLL) threads the bilayer. One can recognise an AB hydrolase-1 domain in the interval 94–211 (PLMLLLHGFP…EYILRHPAQL (118 aa)). The active-site Nucleophile is D169. The active-site Proton donor is the Y281. H336 functions as the Proton acceptor in the catalytic mechanism.

It belongs to the AB hydrolase superfamily. Epoxide hydrolase family.

It is found in the membrane. This Homo sapiens (Human) protein is Epoxide hydrolase 4 (EPHX4).